Reading from the N-terminus, the 877-residue chain is Alanine--tRNA ligase (877 aa).

Zn(2+) contacts are provided by H566, H570, C668, and H672.

Belongs to the class-II aminoacyl-tRNA synthetase family. Requires Zn(2+) as cofactor.

The protein resides in the cytoplasm. The enzyme catalyses tRNA(Ala) + L-alanine + ATP = L-alanyl-tRNA(Ala) + AMP + diphosphate. Functionally, catalyzes the attachment of alanine to tRNA(Ala) in a two-step reaction: alanine is first activated by ATP to form Ala-AMP and then transferred to the acceptor end of tRNA(Ala). Also edits incorrectly charged Ser-tRNA(Ala) and Gly-tRNA(Ala) via its editing domain. This is Alanine--tRNA ligase from Staphylococcus aureus (strain USA300 / TCH1516).